Here is a 938-residue protein sequence, read N- to C-terminus: Probable outer membrane protein pmp15 (938 aa).

A signal peptide spans methionine 1 to alanine 17. One can recognise an Autotransporter domain in the interval aspartate 659–phenylalanine 938.

It belongs to the PMP outer membrane protein family.

The protein localises to the secreted. It is found in the cell wall. It localises to the cell outer membrane. The chain is Probable outer membrane protein pmp15 (pmp15) from Chlamydia pneumoniae (Chlamydophila pneumoniae).